We begin with the raw amino-acid sequence, 302 residues long: UDP-3-O-acyl-N-acetylglucosamine deacetylase (302 aa).

Zn(2+) is bound by residues H78, H237, and D241. Catalysis depends on H264, which acts as the Proton donor.

It belongs to the LpxC family. Zn(2+) serves as cofactor.

The enzyme catalyses a UDP-3-O-[(3R)-3-hydroxyacyl]-N-acetyl-alpha-D-glucosamine + H2O = a UDP-3-O-[(3R)-3-hydroxyacyl]-alpha-D-glucosamine + acetate. It functions in the pathway glycolipid biosynthesis; lipid IV(A) biosynthesis; lipid IV(A) from (3R)-3-hydroxytetradecanoyl-[acyl-carrier-protein] and UDP-N-acetyl-alpha-D-glucosamine: step 2/6. Its function is as follows. Catalyzes the hydrolysis of UDP-3-O-myristoyl-N-acetylglucosamine to form UDP-3-O-myristoylglucosamine and acetate, the committed step in lipid A biosynthesis. This Hahella chejuensis (strain KCTC 2396) protein is UDP-3-O-acyl-N-acetylglucosamine deacetylase.